An 807-amino-acid chain; its full sequence is cAMP-regulated phosphoprotein 21 (807 aa).

A disordered region spans residues 1–127 (MSEQGGLTPT…KNREKLSERP (127 aa)). Ser2 is subject to N-acetylserine. A Phosphoserine modification is found at Ser32. Positions 32–57 (SLDEEEKLELQRRLAAQNQERRKSKS) form a coiled coil. Ser55 is modified (phosphoserine; by PKA). Residues 89-98 (IHLQLSSFPS) show a composition bias toward polar residues. Over residues 101–127 (EEDKSRKDDSEREKEKDKNREKLSERP) the composition is skewed to basic and acidic residues. At Ser133 the chain carries Phosphoserine. Residues 163-226 (RMILLKMEQE…SVIINKTSST (64 aa)) enclose the R3H domain. The SUZ domain occupies 227–298 (RIPEQRFCEH…VRERIFAHDS (72 aa)). The segment at 245–282 (SQKRFILKRDNSSIDKEDNQNRMHPFRDDRRSKSIEER) is disordered. 2 positions are modified to phosphoserine: Asn265 and Ser298. 4 disordered regions span residues 328–434 (LFRA…TSSV), 474–536 (GSIL…QPQM), 552–576 (SQLS…YPAS), and 595–627 (QLST…QQPP). Positions 337–348 (GRTSGSRQSSSE) are enriched in low complexity. Residues 349–358 (TELRWPDHQR) show a composition bias toward basic and acidic residues. The span at 359 to 380 (AWSSTDSDSSNRNLKPTMTKTA) shows a compositional bias: polar residues. Ser361 and Ser381 each carry phosphoserine. A compositionally biased stretch (low complexity) spans 401–421 (GKLSKTGSESSSSAGSSGSLS). Residues 422–434 (RTHPQSTALTSSV) are compositionally biased toward polar residues. Residues 514-524 (QQPPQQQPSPQ) show a composition bias toward pro residues. A compositionally biased stretch (low complexity) spans 525–535 (PQQQVQASQPQ). Composition is skewed to polar residues over residues 552 to 563 (SQLSMSRQSSGD) and 595 to 613 (QLST…QQVL). Phosphoserine is present on Ser557. Arg650 is modified (asymmetric dimethylarginine).

As to quaternary structure, interacts with CALM1. In terms of processing, phosphorylation of isoform 2 at Ser-55 is enhanced upon dopamine D1 receptor activation and favors interaction with CALM1. Post-translationally, methylated by CARM1 at Arg-650 in immature thymocytes. As to expression, present at high levels in thymus and low levels in brain. In thymus, isoform 1 is specifically found in immature thymocytes (at protein level).

Its subcellular location is the cytoplasm. Its function is as follows. May act as a competitive inhibitor of calmodulin-dependent enzymes such as calcineurin in neurons. The chain is cAMP-regulated phosphoprotein 21 (Arpp21) from Mus musculus (Mouse).